We begin with the raw amino-acid sequence, 508 residues long: Cytochrome c-552 (508 aa).

The first 23 residues, 1-23 (MNKSYKILLTGSVIAIGAMGLMA), serve as a signal peptide directing secretion. Heme c is bound at residue His103. Heme contacts are provided by Cys131, Cys134, and Lys135. Cys169, Cys172, His173, Cys211, Cys214, and His215 together coordinate heme c. Positions 217, 218, 274, and 276 each coordinate Ca(2+). Substrate is bound at residue Tyr218. Substrate is bound at residue His277. 9 residues coordinate heme c: His288, Cys295, Cys298, His299, His313, Cys326, Cys329, His330, and His405. The tract at residues 485–508 (GRLDPKTLEGMSNKSSWSQTELSQ) is disordered. The span at 494-508 (GMSNKSSWSQTELSQ) shows a compositional bias: polar residues.

This sequence belongs to the cytochrome c-552 family. Ca(2+) serves as cofactor. Heme c is required as a cofactor.

The protein localises to the periplasm. The catalysed reaction is 6 Fe(III)-[cytochrome c] + NH4(+) + 2 H2O = 6 Fe(II)-[cytochrome c] + nitrite + 8 H(+). Its pathway is nitrogen metabolism; nitrate reduction (assimilation). In terms of biological role, catalyzes the reduction of nitrite to ammonia, consuming six electrons in the process. In Desulfotalea psychrophila (strain LSv54 / DSM 12343), this protein is Cytochrome c-552.